Consider the following 235-residue polypeptide: tRNA1(Val) (adenine(37)-N6)-methyltransferase (235 aa).

Belongs to the methyltransferase superfamily. tRNA (adenine-N(6)-)-methyltransferase family.

It is found in the cytoplasm. The enzyme catalyses adenosine(37) in tRNA1(Val) + S-adenosyl-L-methionine = N(6)-methyladenosine(37) in tRNA1(Val) + S-adenosyl-L-homocysteine + H(+). Functionally, specifically methylates the adenine in position 37 of tRNA(1)(Val) (anticodon cmo5UAC). This chain is tRNA1(Val) (adenine(37)-N6)-methyltransferase, found in Glaesserella parasuis serovar 5 (strain SH0165) (Haemophilus parasuis).